Reading from the N-terminus, the 93-residue chain is Integration host factor subunit beta (93 aa).

It belongs to the bacterial histone-like protein family. As to quaternary structure, heterodimer of an alpha and a beta chain.

In terms of biological role, this protein is one of the two subunits of integration host factor, a specific DNA-binding protein that functions in genetic recombination as well as in transcriptional and translational control. This chain is Integration host factor subunit beta, found in Cereibacter sphaeroides (strain KD131 / KCTC 12085) (Rhodobacter sphaeroides).